A 203-amino-acid polypeptide reads, in one-letter code: Peptide deformylase (203 aa).

C130 and H173 together coordinate Fe cation. E174 is an active-site residue. Position 177 (H177) interacts with Fe cation.

The protein belongs to the polypeptide deformylase family. Fe(2+) serves as cofactor.

It catalyses the reaction N-terminal N-formyl-L-methionyl-[peptide] + H2O = N-terminal L-methionyl-[peptide] + formate. Its function is as follows. Removes the formyl group from the N-terminal Met of newly synthesized proteins. Requires at least a dipeptide for an efficient rate of reaction. N-terminal L-methionine is a prerequisite for activity but the enzyme has broad specificity at other positions. This is Peptide deformylase from Streptococcus pneumoniae serotype 19F (strain G54).